The sequence spans 273 residues: 4-hydroxy-tetrahydrodipicolinate reductase (273 aa).

NAD(+) contacts are provided by residues 12–17 (GAGGRM) and Glu-38. Arg-39 serves as a coordination point for NADP(+). Residues 102–104 (GTT) and 126–129 (AANF) each bind NAD(+). The active-site Proton donor/acceptor is the His-159. His-160 is a (S)-2,3,4,5-tetrahydrodipicolinate binding site. Lys-163 functions as the Proton donor in the catalytic mechanism. Residue 169 to 170 (GT) participates in (S)-2,3,4,5-tetrahydrodipicolinate binding.

The protein belongs to the DapB family. As to quaternary structure, homotetramer.

It localises to the cytoplasm. It catalyses the reaction (S)-2,3,4,5-tetrahydrodipicolinate + NAD(+) + H2O = (2S,4S)-4-hydroxy-2,3,4,5-tetrahydrodipicolinate + NADH + H(+). It carries out the reaction (S)-2,3,4,5-tetrahydrodipicolinate + NADP(+) + H2O = (2S,4S)-4-hydroxy-2,3,4,5-tetrahydrodipicolinate + NADPH + H(+). The protein operates within amino-acid biosynthesis; L-lysine biosynthesis via DAP pathway; (S)-tetrahydrodipicolinate from L-aspartate: step 4/4. In terms of biological role, catalyzes the conversion of 4-hydroxy-tetrahydrodipicolinate (HTPA) to tetrahydrodipicolinate. The protein is 4-hydroxy-tetrahydrodipicolinate reductase of Salmonella typhimurium (strain LT2 / SGSC1412 / ATCC 700720).